A 259-amino-acid polypeptide reads, in one-letter code: Deoxyribose-phosphate aldolase (259 aa).

Aspartate 102 acts as the Proton donor/acceptor in catalysis. Lysine 167 serves as the catalytic Schiff-base intermediate with acetaldehyde. Lysine 201 serves as the catalytic Proton donor/acceptor.

It belongs to the DeoC/FbaB aldolase family. DeoC type 2 subfamily.

The protein localises to the cytoplasm. The catalysed reaction is 2-deoxy-D-ribose 5-phosphate = D-glyceraldehyde 3-phosphate + acetaldehyde. Its pathway is carbohydrate degradation; 2-deoxy-D-ribose 1-phosphate degradation; D-glyceraldehyde 3-phosphate and acetaldehyde from 2-deoxy-alpha-D-ribose 1-phosphate: step 2/2. Its function is as follows. Catalyzes a reversible aldol reaction between acetaldehyde and D-glyceraldehyde 3-phosphate to generate 2-deoxy-D-ribose 5-phosphate. This Escherichia fergusonii (strain ATCC 35469 / DSM 13698 / CCUG 18766 / IAM 14443 / JCM 21226 / LMG 7866 / NBRC 102419 / NCTC 12128 / CDC 0568-73) protein is Deoxyribose-phosphate aldolase.